Consider the following 634-residue polypeptide: tRNA uridine 5-carboxymethylaminomethyl modification enzyme MnmG (634 aa).

13 to 18 (GAGHAG) is a binding site for FAD. Residue 273-287 (GPRYCPSIEDKIIKF) participates in NAD(+) binding.

This sequence belongs to the MnmG family. As to quaternary structure, homodimer. Heterotetramer of two MnmE and two MnmG subunits. Requires FAD as cofactor.

Its subcellular location is the cytoplasm. Functionally, NAD-binding protein involved in the addition of a carboxymethylaminomethyl (cmnm) group at the wobble position (U34) of certain tRNAs, forming tRNA-cmnm(5)s(2)U34. In Buchnera aphidicola subsp. Cinara cedri (strain Cc), this protein is tRNA uridine 5-carboxymethylaminomethyl modification enzyme MnmG.